The chain runs to 204 residues: Peptidyl-tRNA hydrolase (204 aa).

Tyr14 is a binding site for tRNA. The active-site Proton acceptor is the His19. TRNA is bound by residues Tyr64, Asn66, and Asn112.

This sequence belongs to the PTH family. In terms of assembly, monomer.

It is found in the cytoplasm. It carries out the reaction an N-acyl-L-alpha-aminoacyl-tRNA + H2O = an N-acyl-L-amino acid + a tRNA + H(+). Functionally, hydrolyzes ribosome-free peptidyl-tRNAs (with 1 or more amino acids incorporated), which drop off the ribosome during protein synthesis, or as a result of ribosome stalling. Its function is as follows. Catalyzes the release of premature peptidyl moieties from peptidyl-tRNA molecules trapped in stalled 50S ribosomal subunits, and thus maintains levels of free tRNAs and 50S ribosomes. This chain is Peptidyl-tRNA hydrolase, found in Nitrobacter hamburgensis (strain DSM 10229 / NCIMB 13809 / X14).